The following is a 290-amino-acid chain: Cbb3-type cytochrome c oxidase subunit FixP (290 aa).

Over 1–32 (MTDHSEFDSVSGKTTTGHEWDGIKELNTPLPR) the chain is Cytoplasmic. A helical membrane pass occupies residues 33-53 (WWVICFYLTIVWAIGYWIVYP). Over 54 to 290 (AWPLISSNTT…VYVHSLGGGK (237 aa)) the chain is Periplasmic. 2 Cytochrome c domains span residues 109–198 (LARA…RSLS) and 206–287 (YDAA…HSLG). The heme c site is built by C122, C125, H126, M173, C219, C222, H223, and M264.

Belongs to the CcoP / FixP family. Component of the cbb3-type cytochrome c oxidase at least composed of FixN, FixO, FixQ and FixP. It depends on heme c as a cofactor.

It localises to the cell inner membrane. The protein operates within energy metabolism; oxidative phosphorylation. Its function is as follows. C-type cytochrome. Part of the cbb3-type cytochrome c oxidase complex. FixP subunit is required for transferring electrons from donor cytochrome c via its heme groups to FixO subunit. From there, electrons are shuttled to the catalytic binuclear center of FixN subunit where oxygen reduction takes place. The complex also functions as a proton pump. The polypeptide is Cbb3-type cytochrome c oxidase subunit FixP (Bradyrhizobium diazoefficiens (strain JCM 10833 / BCRC 13528 / IAM 13628 / NBRC 14792 / USDA 110)).